The chain runs to 230 residues: MALYDRANSRNAYAEDSLLRESELVSFVKTTYKFFAGSLLLATIGALLGLMNFQAVVQYKWVFFIAEIAAFFGLMFSKSKPGLNLFMLFAFTSLSGVTLVPLLGMVIAKAGLGAIWQALGMTTIVFGLMSVYALKTKNDLANMGKMLFIALIVVVVCSLINLFLGSPMFQVVIAGASAILFSLYIAYDTQNIVKGMYDSPIDAAVSLYLDFLNVFISILQIIGIFSDRDT.

Transmembrane regions (helical) follow at residues 34–54 (FFAG…MNFQ), 56–76 (VVQY…GLMF), 87–107 (MLFA…GMVI), 111–131 (GLGA…LMSV), 146–166 (MLFI…FLGS), 167–187 (PMFQ…YIAY), and 205–225 (VSLY…IGIF).

The protein belongs to the BI1 family.

It localises to the cell membrane. This is an uncharacterized protein from Helicobacter pylori (strain ATCC 700392 / 26695) (Campylobacter pylori).